Reading from the N-terminus, the 259-residue chain is Bisphosphoglycerate mutase (259 aa).

At Ser-2 the chain carries N-acetylserine. Residues Arg-10–Asn-17, Cys-23–Ser-24, Arg-62, Glu-89–Tyr-92, Arg-100, and Arg-116–Arg-117 each bind substrate. The Tele-phosphohistidine intermediate role is filled by His-11. Glu-89 serves as the catalytic Proton donor/acceptor. At Thr-122 the chain carries Phosphothreonine. Gly-189–Asn-190 provides a ligand contact to substrate.

This sequence belongs to the phosphoglycerate mutase family. BPG-dependent PGAM subfamily. As to quaternary structure, homodimer.

It catalyses the reaction (2R)-3-phospho-glyceroyl phosphate = (2R)-2,3-bisphosphoglycerate + H(+). It carries out the reaction (2R)-2-phosphoglycerate = (2R)-3-phosphoglycerate. At alkaline pH BPGM favors the synthase reaction; however, at lower pH the phosphatase reaction is dominant. Inhibited by citrate. Plays a major role in regulating hemoglobin oxygen affinity by controlling the levels of its allosteric effector 2,3-bisphosphoglycerate (2,3-BPG). Also exhibits mutase (EC 5.4.2.11) activity. The sequence is that of Bisphosphoglycerate mutase (BPGM) from Macaca fascicularis (Crab-eating macaque).